A 398-amino-acid polypeptide reads, in one-letter code: Glycerol-3-phosphate dehydrogenase [NAD(+)] 1 (398 aa).

NAD(+) contacts are provided by residues 50–55 (GSGNWG), Phe-138, Lys-161, and Ala-194. Lys-161 is a binding site for substrate. Catalysis depends on Lys-253, which acts as the Proton acceptor. Residues Arg-318 and Gln-350 each coordinate NAD(+). 318–319 (RN) is a binding site for substrate.

Belongs to the NAD-dependent glycerol-3-phosphate dehydrogenase family.

It is found in the cytoplasm. The enzyme catalyses sn-glycerol 3-phosphate + NAD(+) = dihydroxyacetone phosphate + NADH + H(+). The sequence is that of Glycerol-3-phosphate dehydrogenase [NAD(+)] 1 (GPD1) from Yarrowia lipolytica (strain CLIB 122 / E 150) (Yeast).